Reading from the N-terminus, the 155-residue chain is Protein-export protein SecB (155 aa).

It belongs to the SecB family. Homotetramer, a dimer of dimers. One homotetramer interacts with 1 SecA dimer.

The protein localises to the cytoplasm. In terms of biological role, one of the proteins required for the normal export of preproteins out of the cell cytoplasm. It is a molecular chaperone that binds to a subset of precursor proteins, maintaining them in a translocation-competent state. It also specifically binds to its receptor SecA. In Methylococcus capsulatus (strain ATCC 33009 / NCIMB 11132 / Bath), this protein is Protein-export protein SecB.